The chain runs to 598 residues: Elongation factor 4 (598 aa).

In terms of domain architecture, tr-type G spans 4 to 181 (KKIRNFAIIA…AIVNLIPPPQ (178 aa)). GTP-binding positions include 16–21 (DHGKST) and 128–131 (NKID).

This sequence belongs to the TRAFAC class translation factor GTPase superfamily. Classic translation factor GTPase family. LepA subfamily.

It localises to the cell membrane. The enzyme catalyses GTP + H2O = GDP + phosphate + H(+). In terms of biological role, required for accurate and efficient protein synthesis under certain stress conditions. May act as a fidelity factor of the translation reaction, by catalyzing a one-codon backward translocation of tRNAs on improperly translocated ribosomes. Back-translocation proceeds from a post-translocation (POST) complex to a pre-translocation (PRE) complex, thus giving elongation factor G a second chance to translocate the tRNAs correctly. Binds to ribosomes in a GTP-dependent manner. This Mesomycoplasma hyopneumoniae (strain 232) (Mycoplasma hyopneumoniae) protein is Elongation factor 4.